Reading from the N-terminus, the 1288-residue chain is Photoreceptor cilium actin regulator (1288 aa).

Glycine 2 carries the N-myristoyl glycine lipid modification. Cysteine 3 carries S-palmitoyl cysteine lipidation. 9 disordered regions span residues 78–147 (MGDP…KWKR), 368–401 (QTSW…QQSP), 423–453 (QPRA…LGTS), 467–527 (PHLS…PFQA), 563–605 (DWSE…SHVE), 686–707 (QKCN…NAIP), 813–1109 (AAKS…EDSQ), 1132–1169 (EAKP…SSGP), and 1190–1288 (LRRT…EEVS). Composition is skewed to polar residues over residues 96–109 (TKTS…SQSH), 382–401 (SVTS…QQSP), and 434–453 (CLSS…LGTS). A compositionally biased stretch (acidic residues) spans 483–495 (DSEDSSPEEEEED). 4 stretches are compositionally biased toward polar residues: residues 848–857 (SPESSKSTEN), 894–904 (SKSTASLTKPH), 927–946 (PPAT…QAEK), and 966–976 (PSGQNRTSESS). Low complexity predominate over residues 1018-1028 (PAQPSPSAVQT). 2 stretches are compositionally biased toward pro residues: residues 1051 to 1063 (PHQP…PPES) and 1071 to 1094 (PSPP…PPMS). The segment covering 1097–1106 (QEHKETRDSE) has biased composition (basic and acidic residues). Residues 1209–1226 (DPTSTSYESQLGQNSSSE) show a composition bias toward polar residues. The segment covering 1268 to 1277 (RTGHIQDKSQ) has biased composition (basic and acidic residues). Positions 1278-1288 (PEAQPQQEEVS) are enriched in polar residues.

As to expression, specifically expressed in retina.

Its subcellular location is the cell projection. The protein localises to the cilium. The protein resides in the photoreceptor outer segment. It localises to the photoreceptor inner segment. Functionally, plays an essential role for normal photoreceptor cell maintenance and vision. The chain is Photoreceptor cilium actin regulator from Homo sapiens (Human).